The chain runs to 209 residues: MSNVHLISHPLVQHKLTLMRRKNASTSTFRTLLAELSNLMAYEVTRDMPLQDIEVETPLETTTGKIIDGKKLVLVSILRAGNGFLDGFLNVVPGARVGHIGLYRDPETLSPVEYYFKMPQEMQERDIVIVDPMLATGNSAIAAVDRLKQLKPRSIKFVCLLTCPEGVAALQKAHPDVDIYTAAIDRQLNEHGYILPGLGDAGDRIFGTK.

5-phospho-alpha-D-ribose 1-diphosphate contacts are provided by residues Arg79, Arg104, and 131-139; that span reads DPMLATGNS. Uracil is bound by residues Ile194 and 199 to 201; that span reads GDA. Asp200 provides a ligand contact to 5-phospho-alpha-D-ribose 1-diphosphate.

This sequence belongs to the UPRTase family. Requires Mg(2+) as cofactor.

It carries out the reaction UMP + diphosphate = 5-phospho-alpha-D-ribose 1-diphosphate + uracil. The protein operates within pyrimidine metabolism; UMP biosynthesis via salvage pathway; UMP from uracil: step 1/1. With respect to regulation, allosterically activated by GTP. In terms of biological role, catalyzes the conversion of uracil and 5-phospho-alpha-D-ribose 1-diphosphate (PRPP) to UMP and diphosphate. The chain is Uracil phosphoribosyltransferase from Polaromonas naphthalenivorans (strain CJ2).